A 490-amino-acid chain; its full sequence is Glutamyl-tRNA(Gln) amidotransferase subunit A (490 aa).

Residues Lys78 and Ser158 each act as charge relay system in the active site. The tract at residues 131–159 (SNETSRFGPPINPWRRKGDNAGLTPGGSS) is disordered. The active-site Acyl-ester intermediate is the Ser182.

This sequence belongs to the amidase family. GatA subfamily. Heterotrimer of A, B and C subunits.

It carries out the reaction L-glutamyl-tRNA(Gln) + L-glutamine + ATP + H2O = L-glutaminyl-tRNA(Gln) + L-glutamate + ADP + phosphate + H(+). Allows the formation of correctly charged Gln-tRNA(Gln) through the transamidation of misacylated Glu-tRNA(Gln) in organisms which lack glutaminyl-tRNA synthetase. The reaction takes place in the presence of glutamine and ATP through an activated gamma-phospho-Glu-tRNA(Gln). The polypeptide is Glutamyl-tRNA(Gln) amidotransferase subunit A (Hyphomonas neptunium (strain ATCC 15444)).